We begin with the raw amino-acid sequence, 635 residues long: Interferon-induced GTP-binding protein Mx1 (635 aa).

The Dynamin-type G domain maps to 31-309; that stretch reads DLALPAIAVI…LVHHIELSLP (279 aa). Residues 41–48 form a G1 motif region; that stretch reads GDQSSGKS. 41–48 serves as a coordination point for GTP; it reads GDQSSGKS. Residues 66-68 form a G2 motif region; that stretch reads VTR. Residues 147-150 form a G3 motif region; the sequence is DLPG. Residues 147 to 151 and 216 to 219 each bind GTP; these read DLPGI and TKPD. Residues 216–219 are G4 motif; it reads TKPD. The segment at 248–251 is G5 motif; it reads RCRG. The 87-residue stretch at 549-635 folds into the GED domain; the sequence is LEELMRHLKS…MEARNYLVKF (87 aa).

The protein belongs to the TRAFAC class dynamin-like GTPase superfamily. Dynamin/Fzo/YdjA family.

It is found in the cytoplasm. This is Interferon-induced GTP-binding protein Mx1 (mx1) from Ictalurus punctatus (Channel catfish).